The sequence spans 82 residues: Escargot/snail protein homolog (82 aa).

C2H2-type zinc fingers lie at residues 1–5 (HQQFH), 18–40 (FSCK…IRTH), 44–66 (CKCP…IRTH), and 72–82 (FSCQHCQSAFV).

The protein belongs to the snail C2H2-type zinc-finger protein family.

The protein localises to the nucleus. The protein is Escargot/snail protein homolog of Calliphora vicina (Blue blowfly).